Consider the following 245-residue polypeptide: 8-amino-3,8-dideoxy-manno-octulosonate cytidylyltransferase (245 aa).

This sequence belongs to the KdsB family.

The protein resides in the cytoplasm. It catalyses the reaction 8-amino-3,8-dideoxy-alpha-D-manno-octulosonate + CTP = CMP-8-amino-3,8-dideoxy-alpha-D-manno-oct-2-ulosonate + diphosphate. It participates in bacterial outer membrane biogenesis; lipopolysaccharide biosynthesis. Activates KDO8N (a required 8-carbon sugar) for incorporation into bacterial lipopolysaccharide in the Shewanella genus. The protein is 8-amino-3,8-dideoxy-manno-octulosonate cytidylyltransferase of Shewanella baltica (strain OS223).